The chain runs to 337 residues: Glyceraldehyde-3-phosphate dehydrogenase (337 aa).

NAD(+) contacts are provided by residues 17–18, Asp39, Lys83, and Ser125; that span reads RI. Residues 156–158, Thr187, Arg202, 215–216, and Arg238 contribute to the D-glyceraldehyde 3-phosphate site; these read SCT and TG. Cys157 (nucleophile) is an active-site residue. Asn319 contacts NAD(+).

It belongs to the glyceraldehyde-3-phosphate dehydrogenase family. In terms of assembly, homotetramer.

It is found in the cytoplasm. The catalysed reaction is D-glyceraldehyde 3-phosphate + phosphate + NAD(+) = (2R)-3-phospho-glyceroyl phosphate + NADH + H(+). It functions in the pathway carbohydrate degradation; glycolysis; pyruvate from D-glyceraldehyde 3-phosphate: step 1/5. In terms of biological role, catalyzes the oxidative phosphorylation of glyceraldehyde 3-phosphate (G3P) to 1,3-bisphosphoglycerate (BPG) using the cofactor NAD. The first reaction step involves the formation of a hemiacetal intermediate between G3P and a cysteine residue, and this hemiacetal intermediate is then oxidized to a thioester, with concomitant reduction of NAD to NADH. The reduced NADH is then exchanged with the second NAD, and the thioester is attacked by a nucleophilic inorganic phosphate to produce BPG. The polypeptide is Glyceraldehyde-3-phosphate dehydrogenase (gapA) (Mycoplasma genitalium (strain ATCC 33530 / DSM 19775 / NCTC 10195 / G37) (Mycoplasmoides genitalium)).